A 137-amino-acid polypeptide reads, in one-letter code: Putative pre-16S rRNA nuclease (137 aa).

It belongs to the YqgF nuclease family.

The protein resides in the cytoplasm. Its function is as follows. Could be a nuclease involved in processing of the 5'-end of pre-16S rRNA. The sequence is that of Putative pre-16S rRNA nuclease from Bacillus cereus (strain B4264).